Consider the following 190-residue polypeptide: Holliday junction branch migration complex subunit RuvA (190 aa).

Residues 1–64 (MIGKLTGTLL…EDAQLLYGFG (64 aa)) form a domain I region. Positions 65-137 (TAQERQAFRE…LKGKLGADVG (73 aa)) are domain II. Positions 137-141 (GVRAH) are flexible linker. Residues 142-190 (AANDNQADILQALLALGYNDKEAAAALKALPADVGVSEGIKLALKSLSK) form a domain III region.

This sequence belongs to the RuvA family. As to quaternary structure, homotetramer. Forms an RuvA(8)-RuvB(12)-Holliday junction (HJ) complex. HJ DNA is sandwiched between 2 RuvA tetramers; dsDNA enters through RuvA and exits via RuvB. An RuvB hexamer assembles on each DNA strand where it exits the tetramer. Each RuvB hexamer is contacted by two RuvA subunits (via domain III) on 2 adjacent RuvB subunits; this complex drives branch migration. In the full resolvosome a probable DNA-RuvA(4)-RuvB(12)-RuvC(2) complex forms which resolves the HJ.

It is found in the cytoplasm. The RuvA-RuvB-RuvC complex processes Holliday junction (HJ) DNA during genetic recombination and DNA repair, while the RuvA-RuvB complex plays an important role in the rescue of blocked DNA replication forks via replication fork reversal (RFR). RuvA specifically binds to HJ cruciform DNA, conferring on it an open structure. The RuvB hexamer acts as an ATP-dependent pump, pulling dsDNA into and through the RuvAB complex. HJ branch migration allows RuvC to scan DNA until it finds its consensus sequence, where it cleaves and resolves the cruciform DNA. The polypeptide is Holliday junction branch migration complex subunit RuvA (Acidovorax ebreus (strain TPSY) (Diaphorobacter sp. (strain TPSY))).